Consider the following 458-residue polypeptide: UDP-N-acetylmuramate--L-alanine ligase (458 aa).

An ATP-binding site is contributed by 118–124; sequence GTHGKTT.

It belongs to the MurCDEF family.

The protein resides in the cytoplasm. The enzyme catalyses UDP-N-acetyl-alpha-D-muramate + L-alanine + ATP = UDP-N-acetyl-alpha-D-muramoyl-L-alanine + ADP + phosphate + H(+). Its pathway is cell wall biogenesis; peptidoglycan biosynthesis. Cell wall formation. In Clostridium acetobutylicum (strain ATCC 824 / DSM 792 / JCM 1419 / IAM 19013 / LMG 5710 / NBRC 13948 / NRRL B-527 / VKM B-1787 / 2291 / W), this protein is UDP-N-acetylmuramate--L-alanine ligase.